Reading from the N-terminus, the 285-residue chain is HTH-type transcriptional regulator MurR (285 aa).

Residues 1-77 form the HTH rpiR-type domain; that stretch reads MLYLTKISNA…MALIGEYSAS (77 aa). The H-T-H motif DNA-binding region spans 37–56; the sequence is SRQMAKQLGISQSSIVKFAQ. One can recognise an SIS domain in the interval 128–268; the sequence is IIDVISKAQF…FVGLVQLNDV (141 aa).

As to quaternary structure, homotetramer.

Its pathway is amino-sugar metabolism; N-acetylmuramate degradation [regulation]. In terms of biological role, represses the expression of the murPQ operon involved in the uptake and degradation of N-acetylmuramic acid (MurNAc). Binds to two adjacent inverted repeats within the operator region. MurNAc 6-phosphate, the substrate of MurQ, is the specific inducer that weakens binding of MurR to the operator. This chain is HTH-type transcriptional regulator MurR, found in Escherichia coli (strain B / BL21-DE3).